The following is a 1021-amino-acid chain: Sodium/potassium-transporting ATPase subunit alpha-1 (1021 aa).

A propeptide spanning residues 1-5 is cleaved from the precursor; the sequence is MGKGV. Residues 1 to 11 are compositionally biased toward basic and acidic residues; it reads MGKGVGRDKYE. Residues 1-36 are disordered; the sequence is MGKGVGRDKYEPAAVSEHGDKKKAKKERDMDELKKE. Over 4 to 85 the chain is Cytoplasmic; it reads GVGRDKYEPA…NALTPPPTTP (82 aa). Lysine 9 carries the post-translational modification N6-acetyllysine. Phosphotyrosine is present on tyrosine 10. Serine 16 is subject to Phosphoserine; by PKC. Lysine 21 carries the post-translational modification N6-acetyllysine. The span at 26 to 36 shows a compositional bias: basic and acidic residues; sequence KERDMDELKKE. 2 positions are modified to phosphoserine: serine 38 and serine 45. The tract at residues 80-82 is phosphoinositide-3 kinase binding; it reads PPP. Residues 86 to 106 form a helical membrane-spanning segment; sequence EWVKFCRQLFGGFSMLLWIGA. Topologically, residues 107–129 are extracellular; sequence ILCFLAYGIQAATEEEPQNDNLY. A helical transmembrane segment spans residues 130–150; the sequence is LGVVLSAVVIITGCFSYYQEA. Topologically, residues 151-286 are cytoplasmic; that stretch reads KSSKIMESFK…GGQTPIAAEI (136 aa). A disordered region spans residues 214-233; sequence SSLTGESEPQTRSPDFTNEN. At serine 226 the chain carries Phosphoserine. Position 258 is a phosphotyrosine (tyrosine 258). The helical transmembrane segment at 287–306 threads the bilayer; that stretch reads EHFIHIITGVAVFLGVSFFI. Residues 307-318 lie on the Extracellular side of the membrane; sequence LSLILEYTWLEA. Residues 319–336 form a helical membrane-spanning segment; sequence VIFLIGIIVANVPEGLLA. At 337–770 the chain is on the cytoplasmic side; the sequence is TVTVCLTLTA…EEGRLIFDNL (434 aa). Aspartate 374 (4-aspartylphosphate intermediate) is an active-site residue. Phosphoserine is present on residues serine 450 and serine 482. Residue lysine 485 coordinates ATP. At tyrosine 540 the chain carries Phosphotyrosine. Positions 594-715 are mediates interaction with SCN7A; sequence RAAVPDAVGK…QGAIVAVTGD (122 aa). Lysine 659 is subject to N6-succinyllysine. Phosphoserine is present on residues serine 666 and serine 673. 2 residues coordinate Mg(2+): aspartate 715 and aspartate 719. Residues 771–790 traverse the membrane as a helical segment; that stretch reads KKSIAYTLTSNIPEITPFLI. The Extracellular portion of the chain corresponds to 791–800; sequence FIIANIPLPL. The chain crosses the membrane as a helical span at residues 801 to 821; that stretch reads GTVTILCIDLGTDMVPAISLA. The Cytoplasmic segment spans residues 822 to 841; sequence YEQAESDIMKRQPRNPKTDK. Residues 842-864 traverse the membrane as a helical segment; it reads LVNERLISMAYGQIGMIQALGGF. Over 865–916 the chain is Extracellular; that stretch reads FTYFVILAENGFLPTHLLGLRVDWDDRWINDVEDSYGQQWTYEQRKIVEFTC. The helical transmembrane segment at 917–936 threads the bilayer; it reads HTAFFVSIVVVQWADLVICK. Topologically, residues 937-949 are cytoplasmic; the sequence is TRRNSVFQQGMKN. Serine 941 bears the Phosphoserine; by PKA mark. A helical membrane pass occupies residues 950-968; the sequence is KILIFGLFEETALAAFLSY. Topologically, residues 969–983 are extracellular; sequence CPGMGVALRMYPLKP. Residues 984–1004 traverse the membrane as a helical segment; it reads TWWFCAFPYSLLIFVYDEVRK. The Cytoplasmic portion of the chain corresponds to 1005-1021; it reads LIIRRRPGGWVEKETYY.

It belongs to the cation transport ATPase (P-type) (TC 3.A.3) family. Type IIC subfamily. As to quaternary structure, the sodium/potassium-transporting ATPase is composed of a catalytic alpha subunit, an auxiliary non-catalytic beta subunit and an additional regulatory subunit. Interacts with regulatory subunit FXYD1. Interacts with regulatory subunit FXYD3. Interacts with SIK1. Interacts with SLC35G1 and STIM1. Interacts with CLN3; this interaction regulates the sodium/potassium-transporting ATPase complex localization at the plasma membrane. Interacts with SCN7A; activates ATP1A1 P-type sodium:potassium-exchanging transporter activity which indirectly signals to nearby neurons to regulate sodium homeostasis. In terms of processing, phosphorylation on Tyr-10 modulates pumping activity. Phosphorylation of Ser-941 by PKA modulates the response of ATP1A1 to PKC. Dephosphorylation by protein phosphatase 2A (PP2A) following increases in intracellular sodium, leading to increase catalytic activity.

The protein resides in the cell membrane. Its subcellular location is the basolateral cell membrane. It is found in the sarcolemma. It localises to the cell projection. The protein localises to the axon. The protein resides in the melanosome. It carries out the reaction K(+)(out) + Na(+)(in) + ATP + H2O = K(+)(in) + Na(+)(out) + ADP + phosphate + H(+). Functionally, this is the catalytic component of the active enzyme, which catalyzes the hydrolysis of ATP coupled with the exchange of sodium and potassium ions across the plasma membrane. This action creates the electrochemical gradient of sodium and potassium ions, providing the energy for active transport of various nutrients. Could also be part of an osmosensory signaling pathway that senses body-fluid sodium levels and controls salt intake behavior as well as voluntary water intake to regulate sodium homeostasis. This Canis lupus familiaris (Dog) protein is Sodium/potassium-transporting ATPase subunit alpha-1 (ATP1A1).